We begin with the raw amino-acid sequence, 88 residues long: HssA/B-like protein 61 (88 aa).

Belongs to the hssA/B family.

This chain is HssA/B-like protein 61 (hssl61), found in Dictyostelium discoideum (Social amoeba).